The sequence spans 274 residues: Remorin 4.2 (274 aa).

Basic and acidic residues predominate over residues 1 to 30; sequence MLTLYHQERSPDATSNDRDETPETVVREVH. 3 disordered regions span residues 1 to 71, 117 to 157, and 218 to 245; these read MLTL…EGEN, TDHE…TVQR, and AMEK…AKRG. 2 stretches are compositionally biased toward polar residues: residues 61-71 and 145-156; these read RSATTMSEGEN and GPGQSRVGSTVQ. Residues 204–239 are a coiled coil; sequence MKKIERKLEERKAKAMEKTQNNVAKAQRKAEERRAT. Residues 231 to 245 are compositionally biased toward basic and acidic residues; it reads RKAEERRATAEAKRG.

This sequence belongs to the remorin family. In terms of assembly, forms homodimer and heterodimer with REM4.1. Interacts with KIN11. Post-translationally, probably ubiquitinated and degraded by the 26S proteasome pathway. Predominantly detected in bud, stem, root, flower, silique, and leaves, and enhanced dramatically in senescence leaf.

The protein resides in the cell membrane. Functionally, collaborates with REM4.1 to positively regulate the BCTV and BSCTV susceptibility. The chain is Remorin 4.2 from Arabidopsis thaliana (Mouse-ear cress).